A 32-amino-acid chain; its full sequence is MAQEIFSIAAVFWILIPIGLVGGALLLKFQGD.

A helical transmembrane segment spans residues 9–27 (AAVFWILIPIGLVGGALLL).

The protein belongs to the PetM family. As to quaternary structure, the 4 large subunits of the cytochrome b6-f complex are cytochrome b6, subunit IV (17 kDa polypeptide, PetD), cytochrome f and the Rieske protein, while the 4 small subunits are PetG, PetL, PetM and PetN. The complex functions as a dimer.

It localises to the cellular thylakoid membrane. Its function is as follows. Component of the cytochrome b6-f complex, which mediates electron transfer between photosystem II (PSII) and photosystem I (PSI), cyclic electron flow around PSI, and state transitions. The polypeptide is Cytochrome b6-f complex subunit 7 (Prochlorococcus marinus (strain MIT 9301)).